We begin with the raw amino-acid sequence, 148 residues long: Large ribosomal subunit protein bL9 (148 aa).

The protein belongs to the bacterial ribosomal protein bL9 family.

Binds to the 23S rRNA. In Aliarcobacter butzleri (strain RM4018) (Arcobacter butzleri), this protein is Large ribosomal subunit protein bL9.